The following is a 164-amino-acid chain: Ribosomal RNA large subunit methyltransferase H (164 aa).

Gly109 lines the S-adenosyl-L-methionine pocket.

It belongs to the RNA methyltransferase RlmH family. Homodimer.

The protein localises to the cytoplasm. The enzyme catalyses pseudouridine(1915) in 23S rRNA + S-adenosyl-L-methionine = N(3)-methylpseudouridine(1915) in 23S rRNA + S-adenosyl-L-homocysteine + H(+). Functionally, specifically methylates the pseudouridine at position 1915 (m3Psi1915) in 23S rRNA. This Methylobacterium radiotolerans (strain ATCC 27329 / DSM 1819 / JCM 2831 / NBRC 15690 / NCIMB 10815 / 0-1) protein is Ribosomal RNA large subunit methyltransferase H.